The following is a 331-amino-acid chain: Pantothenate kinase (331 aa).

109-116 (GSVAVGKS) provides a ligand contact to ATP.

This sequence belongs to the prokaryotic pantothenate kinase family.

The protein localises to the cytoplasm. It carries out the reaction (R)-pantothenate + ATP = (R)-4'-phosphopantothenate + ADP + H(+). Its pathway is cofactor biosynthesis; coenzyme A biosynthesis; CoA from (R)-pantothenate: step 1/5. This is Pantothenate kinase from Rhizobium leguminosarum bv. trifolii (strain WSM2304).